The primary structure comprises 78 residues: Putative membrane protein insertion efficiency factor (78 aa).

Belongs to the UPF0161 family.

The protein resides in the cell inner membrane. Functionally, could be involved in insertion of integral membrane proteins into the membrane. The sequence is that of Putative membrane protein insertion efficiency factor from Prochlorococcus marinus (strain MIT 9312).